We begin with the raw amino-acid sequence, 109 residues long: Iron-sulfur cluster assembly protein CyaY (109 aa).

Belongs to the frataxin family.

Its function is as follows. Involved in iron-sulfur (Fe-S) cluster assembly. May act as a regulator of Fe-S biogenesis. The chain is Iron-sulfur cluster assembly protein CyaY from Bordetella petrii (strain ATCC BAA-461 / DSM 12804 / CCUG 43448).